We begin with the raw amino-acid sequence, 83 residues long: Kunitz-type serine protease inhibitor textilinin-7 (83 aa).

The N-terminal stretch at 1–24 (MSSGGLLLLLGLLTLWEVLTPVSS) is a signal peptide. The BPTI/Kunitz inhibitor domain occupies 31–81 (CELLPDTGSCEDFTGAFHYSTRDRECIEFIYGGCGGNANNFKTLEECESTC). 3 disulfide bridges follow: C31-C81, C40-C64, and C56-C77.

This sequence belongs to the venom Kunitz-type family. As to expression, expressed by the venom gland.

Its subcellular location is the secreted. Functionally, serine protease inhibitor. This Pseudonaja textilis textilis (Eastern brown snake) protein is Kunitz-type serine protease inhibitor textilinin-7.